Reading from the N-terminus, the 230-residue chain is Extracellular ribonuclease LE (230 aa).

The first 25 residues, 1–25 (MASNSAFSLFLILLIITQCLSVLNA), serve as a signal peptide directing secretion. Glutamine 37 lines the RNA pocket. 5 cysteine pairs are disulfide-bonded: cysteine 43–cysteine 49, cysteine 50–cysteine 106, cysteine 79–cysteine 125, cysteine 186–cysteine 221, and cysteine 202–cysteine 213. Residues histidine 64, phenylalanine 114, 117 to 118 (HE), and 121 to 122 (KH) each bind RNA. Histidine 64 serves as the catalytic Proton donor. Glutamate 118 is a catalytic residue. The active-site Proton acceptor is histidine 122.

Belongs to the RNase T2 family.

The protein resides in the secreted. It is found in the extracellular space. Its subcellular location is the cell wall. The enzyme catalyses a ribonucleotidyl-ribonucleotide-RNA + H2O = a 3'-end 3'-phospho-ribonucleotide-RNA + a 5'-end dephospho-ribonucleoside-RNA + H(+). Functionally, probably involved in plant phosphate-starvation rescue system. This chain is Extracellular ribonuclease LE, found in Solanum lycopersicum (Tomato).